The sequence spans 247 residues: MSTTPKHAYRRILLKLSGEALMGEEGFGIDPKVLERMAQEIKELVELGIEVGLVIGGGNLFRGEGLAKAGMNRVVGDHMGMLATVMNGLAMRDALHRAFVNARLMSAIPLNGVCDAYNWAEAISLLKSGRVVIFAAGTGNPFFTTDSAACLRGIEIEADAVLKGTKVDGVYDSDPAKNPDAVLYKKLSYSEVLDKELKVMDLAAFTLARDHNIPIRVFNMNTPGCLRAVVLGEDVGTVICHPEKQDN.

15–18 (KLSG) contacts ATP. An involved in allosteric activation by GTP region spans residues 23-28 (GEEGFG). Gly-57 is a UMP binding site. 2 residues coordinate ATP: Gly-58 and Arg-62. UMP contacts are provided by residues Asp-77 and 138-145 (TGNPFFTT). ATP contacts are provided by Thr-165, Tyr-171, and Asp-174.

It belongs to the UMP kinase family. Homohexamer.

The protein localises to the cytoplasm. It carries out the reaction UMP + ATP = UDP + ADP. Its pathway is pyrimidine metabolism; CTP biosynthesis via de novo pathway; UDP from UMP (UMPK route): step 1/1. With respect to regulation, allosterically activated by GTP. Inhibited by UTP. Catalyzes the reversible phosphorylation of UMP to UDP. The chain is Uridylate kinase from Pseudoalteromonas atlantica (strain T6c / ATCC BAA-1087).